The sequence spans 553 residues: Mannuronan C5-epimerase AlgE4 (553 aa).

PbH1 repeat units lie at residues 133 to 155, 157 to 179, 180 to 202, 204 to 226, 234 to 256, 257 to 279, 280 to 301, and 320 to 342; these read DRDVTIERVEVREMSGYGFDPHE, TINLTIRDSVAHDNGLDGFVADY, LVDSVFENNVAYANDRHGFNVVT, THDFVMTNNVAYGNGSSGLVVQR, PSNILIDGGAYYDNAREGVLLKM, TSDITLQNADIHGNGSSGVRVYG, AQDVQILDNQIHDNAQAAAVPE, and TLNTRIEGNTISGSANSTYGIQE. The disordered stretch occupies residues 367-427; the sequence is YGPHSTVSGE…DILDGGAGRD (61 aa). Hemolysin-type calcium-binding repeat units follow at residues 403-420 and 421-438; these read QGGSGADRLDGGAGDDIL and DGGAGRDRLSGGAGADTF.

The protein belongs to the D-mannuronate C5-epimerase family. Ca(2+) is required as a cofactor.

It is found in the secreted. The catalysed reaction is [(1-&gt;4)-beta-D-mannuronosyl](n) = [alginate](n). Its pathway is glycan biosynthesis; alginate biosynthesis. Its activity is regulated as follows. Inhibited by zinc. In terms of biological role, converts beta-D-mannuronic acid (M) to alpha-L-guluronic acid (G), but introduces almost exclusively MG blocks, producing a polymer with non-gel-forming capacity. The sequence is that of Mannuronan C5-epimerase AlgE4 from Azotobacter vinelandii.